A 154-amino-acid polypeptide reads, in one-letter code: Protein X (154 aa).

The interval 68-117 (PCALRFTSARRMETTVNAHQILPKVLHKRTLGLSAMSTTDLEAYFKACLF) is mitochondrial targeting sequence.

Belongs to the orthohepadnavirus protein X family. May form homodimer. May interact with host CEBPA, CFLAR, CREB1, DDB1, E4F1, HBXIP, HSPD1/HSP60, NFKBIA, POLR2E and SMAD4. Interacts with host SMC5-SMC6 complex and induces its degradation. Interacts with host TRPC4AP; leading to prevent ubiquitination of TRPC4AP. Interacts with host PLSCR1; this interaction promotes ubiquitination and degradation of HBx and impairs HBx-mediated cell proliferation. In terms of processing, a fraction may be phosphorylated in insect cells and HepG2 cells, a human hepatoblastoma cell line. Phosphorylated in vitro by host protein kinase C or mitogen-activated protein kinase. N-acetylated in insect cells.

It is found in the host cytoplasm. Its subcellular location is the host nucleus. The protein localises to the host mitochondrion. Its function is as follows. Multifunctional protein that plays a role in silencing host antiviral defenses and promoting viral transcription. Does not seem to be essential for HBV infection. May be directly involved in development of cirrhosis and liver cancer (hepatocellular carcinoma). Most of cytosolic activities involve modulation of cytosolic calcium. The effect on apoptosis is controversial depending on the cell types in which the studies have been conducted. May induce apoptosis by localizing in mitochondria and causing loss of mitochondrial membrane potential. May also modulate apoptosis by binding host CFLAR, a key regulator of the death-inducing signaling complex (DISC). Promotes viral transcription by using the host E3 ubiquitin ligase DDB1 to target the SMC5-SMC6 complex to proteasomal degradation. This host complex would otherwise bind to viral episomal DNA, and prevents its transcription. Moderately stimulates transcription of many different viral and cellular transcription elements. Promoters and enhancers stimulated by HBx contain DNA binding sites for NF-kappa-B, AP-1, AP-2, c-EBP, ATF/CREB, or the calcium-activated factor NF-AT. In Hepatitis B virus genotype E (isolate Cote d'Ivoire/ABI-129/2003) (HBV-E), this protein is Protein X.